The following is a 256-amino-acid chain: Hydroxyacylglutathione hydrolase (256 aa).

7 residues coordinate Zn(2+): His-53, His-55, Asp-57, His-58, His-113, Asp-130, and His-168.

It belongs to the metallo-beta-lactamase superfamily. Glyoxalase II family. In terms of assembly, monomer. It depends on Zn(2+) as a cofactor.

It carries out the reaction an S-(2-hydroxyacyl)glutathione + H2O = a 2-hydroxy carboxylate + glutathione + H(+). Its pathway is secondary metabolite metabolism; methylglyoxal degradation; (R)-lactate from methylglyoxal: step 2/2. In terms of biological role, thiolesterase that catalyzes the hydrolysis of S-D-lactoyl-glutathione to form glutathione and D-lactic acid. This is Hydroxyacylglutathione hydrolase from Tolumonas auensis (strain DSM 9187 / NBRC 110442 / TA 4).